The chain runs to 197 residues: Negative modulator of initiation of replication (197 aa).

Interaction with DNA stretches follow at residues 100–101 (AV), 129–133 (RTRVY), and 163–169 (NTNSGRK).

Belongs to the SeqA family. Homodimer. Polymerizes to form helical filaments.

It localises to the cytoplasm. Functionally, negative regulator of replication initiation, which contributes to regulation of DNA replication and ensures that replication initiation occurs exactly once per chromosome per cell cycle. Binds to pairs of hemimethylated GATC sequences in the oriC region, thus preventing assembly of replication proteins and re-initiation at newly replicated origins. Repression is relieved when the region becomes fully methylated. In Haemophilus influenzae (strain ATCC 51907 / DSM 11121 / KW20 / Rd), this protein is Negative modulator of initiation of replication.